A 466-amino-acid chain; its full sequence is Cysteine--tRNA ligase (466 aa).

Cys-29 contacts Zn(2+). A 'HIGH' region motif is present at residues 31–41; the sequence is ATVQAAPHIGH. The Zn(2+) site is built by Cys-208, His-233, and Glu-237. The short motif at 264-268 is the 'KMSKS' region element; that stretch reads KMSKS. Residue Lys-267 coordinates ATP.

Belongs to the class-I aminoacyl-tRNA synthetase family. In terms of assembly, monomer. Zn(2+) serves as cofactor.

It is found in the cytoplasm. The catalysed reaction is tRNA(Cys) + L-cysteine + ATP = L-cysteinyl-tRNA(Cys) + AMP + diphosphate. The sequence is that of Cysteine--tRNA ligase from Streptomyces griseus subsp. griseus (strain JCM 4626 / CBS 651.72 / NBRC 13350 / KCC S-0626 / ISP 5235).